A 391-amino-acid polypeptide reads, in one-letter code: Na(+)/H(+) antiporter NhaA (391 aa).

The next 11 helical transmembrane spans lie at 14 to 34 (AGGILLMAAVILAMIMANSPL), 59 to 79 (LIHWINDGLMALFFMLIGLEV), 95 to 115 (SLPTFAAIGGMIFPAAIYLIF), 124 to 144 (VGWAIPAATDIAFALGIMALL), 154 to 174 (VFLLALAIIDDLGVVVIIAMF), 177 to 197 (TDLSAISLVVAALAIVILVGL), 213 to 233 (LILWIAVLKSGVHATLAGVII), 261 to 281 (FVILPIFAFANAGVDLSGMSL), 292 to 312 (IALGLLLGKPLGVLLFSFVAV), 331 to 351 (VAVMCGIGFTMSMFISSLAFI), and 363 to 383 (LGILTGSIMSAVIGYFWLSKV).

This sequence belongs to the NhaA Na(+)/H(+) (TC 2.A.33) antiporter family.

It is found in the cell inner membrane. The enzyme catalyses Na(+)(in) + 2 H(+)(out) = Na(+)(out) + 2 H(+)(in). Na(+)/H(+) antiporter that extrudes sodium in exchange for external protons. The chain is Na(+)/H(+) antiporter NhaA from Shewanella loihica (strain ATCC BAA-1088 / PV-4).